The primary structure comprises 305 residues: Acetyl-coenzyme A carboxylase carboxyl transferase subunit beta (305 aa).

A CoA carboxyltransferase N-terminal domain is found at 25–294 (VWTKCDSCGQ…PGNDDVEIRS (270 aa)). 4 residues coordinate Zn(2+): Cys-29, Cys-32, Cys-48, and Cys-51. A C4-type zinc finger spans residues 29-51 (CDSCGQVLYRAELERNLGVCPKC). The disordered stretch occupies residues 281-305 (NHPEPGNDDVEIRSDAPSESSQDDA).

Belongs to the AccD/PCCB family. As to quaternary structure, acetyl-CoA carboxylase is a heterohexamer composed of biotin carboxyl carrier protein (AccB), biotin carboxylase (AccC) and two subunits each of ACCase subunit alpha (AccA) and ACCase subunit beta (AccD). Requires Zn(2+) as cofactor.

The protein localises to the cytoplasm. The enzyme catalyses N(6)-carboxybiotinyl-L-lysyl-[protein] + acetyl-CoA = N(6)-biotinyl-L-lysyl-[protein] + malonyl-CoA. It participates in lipid metabolism; malonyl-CoA biosynthesis; malonyl-CoA from acetyl-CoA: step 1/1. Its function is as follows. Component of the acetyl coenzyme A carboxylase (ACC) complex. Biotin carboxylase (BC) catalyzes the carboxylation of biotin on its carrier protein (BCCP) and then the CO(2) group is transferred by the transcarboxylase to acetyl-CoA to form malonyl-CoA. The polypeptide is Acetyl-coenzyme A carboxylase carboxyl transferase subunit beta (Pectobacterium atrosepticum (strain SCRI 1043 / ATCC BAA-672) (Erwinia carotovora subsp. atroseptica)).